The sequence spans 302 residues: Ribosomal RNA small subunit methyltransferase H (302 aa).

Residues 36 to 38 (GGH), Asp-56, Phe-84, Asp-99, and Gln-106 each bind S-adenosyl-L-methionine.

It belongs to the methyltransferase superfamily. RsmH family.

Its subcellular location is the cytoplasm. It catalyses the reaction cytidine(1402) in 16S rRNA + S-adenosyl-L-methionine = N(4)-methylcytidine(1402) in 16S rRNA + S-adenosyl-L-homocysteine + H(+). Its function is as follows. Specifically methylates the N4 position of cytidine in position 1402 (C1402) of 16S rRNA. The polypeptide is Ribosomal RNA small subunit methyltransferase H (Flavobacterium johnsoniae (strain ATCC 17061 / DSM 2064 / JCM 8514 / BCRC 14874 / CCUG 350202 / NBRC 14942 / NCIMB 11054 / UW101) (Cytophaga johnsonae)).